A 197-amino-acid polypeptide reads, in one-letter code: Glycerol-3-phosphate acyltransferase (197 aa).

A run of 6 helical transmembrane segments spans residues 1-21 (MNIL…GFLI), 50-70 (WPAL…VKIA), 77-97 (GLIE…PIWL), 111-131 (MFLA…LIVL), 137-157 (VSLS…FYLG), and 158-178 (KFMH…IWKH).

This sequence belongs to the PlsY family. In terms of assembly, probably interacts with PlsX.

The protein localises to the cell inner membrane. The enzyme catalyses an acyl phosphate + sn-glycerol 3-phosphate = a 1-acyl-sn-glycero-3-phosphate + phosphate. It participates in lipid metabolism; phospholipid metabolism. Catalyzes the transfer of an acyl group from acyl-phosphate (acyl-PO(4)) to glycerol-3-phosphate (G3P) to form lysophosphatidic acid (LPA). This enzyme utilizes acyl-phosphate as fatty acyl donor, but not acyl-CoA or acyl-ACP. The chain is Glycerol-3-phosphate acyltransferase from Prochlorococcus marinus (strain MIT 9301).